A 159-amino-acid polypeptide reads, in one-letter code: Kojic acid related protein 6 (159 aa).

In terms of biological role, negatively regulates mycelium growth and conidial formation and is required for stress tolerance. Plays a role in kojic acid synthesis in coordination with kojA, kojR and kojT where it acts upstream of kojA. The sequence is that of Kojic acid related protein 6 from Aspergillus oryzae (strain ATCC 42149 / RIB 40) (Yellow koji mold).